The primary structure comprises 247 residues: 1-(5-phosphoribosyl)-5-[(5-phosphoribosylamino)methylideneamino] imidazole-4-carboxamide isomerase (247 aa).

The active-site Proton acceptor is aspartate 8. Aspartate 130 (proton donor) is an active-site residue.

Belongs to the HisA/HisF family.

The protein localises to the cytoplasm. It carries out the reaction 1-(5-phospho-beta-D-ribosyl)-5-[(5-phospho-beta-D-ribosylamino)methylideneamino]imidazole-4-carboxamide = 5-[(5-phospho-1-deoxy-D-ribulos-1-ylimino)methylamino]-1-(5-phospho-beta-D-ribosyl)imidazole-4-carboxamide. The protein operates within amino-acid biosynthesis; L-histidine biosynthesis; L-histidine from 5-phospho-alpha-D-ribose 1-diphosphate: step 4/9. This chain is 1-(5-phosphoribosyl)-5-[(5-phosphoribosylamino)methylideneamino] imidazole-4-carboxamide isomerase, found in Leptospira biflexa serovar Patoc (strain Patoc 1 / Ames).